Here is a 452-residue protein sequence, read N- to C-terminus: Bifunctional protein GlmU (452 aa).

The tract at residues 1–232 (MTTRTSLTIV…EDEVRGINTK (232 aa)) is pyrophosphorylase. UDP-N-acetyl-alpha-D-glucosamine-binding positions include 11-14 (LAAG), K25, Q78, and 83-84 (GT). D108 contacts Mg(2+). 4 residues coordinate UDP-N-acetyl-alpha-D-glucosamine: G144, E158, N173, and N230. N230 is a binding site for Mg(2+). Positions 233-253 (AQLAEAEAVMQTRLRQAAMTA) are linker. Residues 254–452 (GVTLISPETI…SARARKPKTS (199 aa)) form an N-acetyltransferase region. UDP-N-acetyl-alpha-D-glucosamine-binding residues include R319 and K337. Catalysis depends on H349, which acts as the Proton acceptor. Residues Y352 and N363 each contribute to the UDP-N-acetyl-alpha-D-glucosamine site. Acetyl-CoA is bound by residues A366, 372 to 373 (NY), S391, S409, and R426.

It in the N-terminal section; belongs to the N-acetylglucosamine-1-phosphate uridyltransferase family. The protein in the C-terminal section; belongs to the transferase hexapeptide repeat family. Homotrimer. The cofactor is Mg(2+).

It is found in the cytoplasm. It catalyses the reaction alpha-D-glucosamine 1-phosphate + acetyl-CoA = N-acetyl-alpha-D-glucosamine 1-phosphate + CoA + H(+). The catalysed reaction is N-acetyl-alpha-D-glucosamine 1-phosphate + UTP + H(+) = UDP-N-acetyl-alpha-D-glucosamine + diphosphate. The protein operates within nucleotide-sugar biosynthesis; UDP-N-acetyl-alpha-D-glucosamine biosynthesis; N-acetyl-alpha-D-glucosamine 1-phosphate from alpha-D-glucosamine 6-phosphate (route II): step 2/2. Its pathway is nucleotide-sugar biosynthesis; UDP-N-acetyl-alpha-D-glucosamine biosynthesis; UDP-N-acetyl-alpha-D-glucosamine from N-acetyl-alpha-D-glucosamine 1-phosphate: step 1/1. It functions in the pathway bacterial outer membrane biogenesis; LPS lipid A biosynthesis. In terms of biological role, catalyzes the last two sequential reactions in the de novo biosynthetic pathway for UDP-N-acetylglucosamine (UDP-GlcNAc). The C-terminal domain catalyzes the transfer of acetyl group from acetyl coenzyme A to glucosamine-1-phosphate (GlcN-1-P) to produce N-acetylglucosamine-1-phosphate (GlcNAc-1-P), which is converted into UDP-GlcNAc by the transfer of uridine 5-monophosphate (from uridine 5-triphosphate), a reaction catalyzed by the N-terminal domain. This Rhodopseudomonas palustris (strain BisB5) protein is Bifunctional protein GlmU.